Here is a 747-residue protein sequence, read N- to C-terminus: MVAFMNSATFVAGLFTLWSRPIWATPASNTNAVVVNGTAFTLNGDHVSYRFHVDDATGDLFSDHFGPRVSGNFPTEIVSQVNGWVNTIGRVRREFPDQGRGDFRIPAIRIRQTAGYTVSELLYRSHTVIPGKPALPGLPATFGSEEDVTTLVVHLYDEISEVAADLSYSIFPKYDAVVRSVNVTNQGAGNITIETLASLSVDFPYEDLDMVYLRGDWAREAHSERRKVEYGTQGFDSSAGYSSHLHNPFLAIMNPATTESQGETWGFSLVYSGSFAVNVERGSQGFTRALLGLNPGQLSWVLRPGESLVSPECVAVYSADGIGGMSRLLHRLYRNHLIKSKFAVSDRPVLLNSWEGLGFNYNETTVYQLATEAAELGVKLFVLDDGWFGDKYPRTADNAGLGDWVPNPDRFPHGLPHEVDRITALHPGNDTSTNLRFGLWFEPEMVNPNSSLYHQHPDWALHAGSYPRTLTRNQLVLNMALPEVQDYVIKSVSDILDSADISYVKWDNNRGIHETPSPSTDHQYMLGMYRVFDNLTTKYPNVLWEGCASGGGRFDPGVLQYFPQIWTSDDTDALERITIQMGTSLAYPPSAMGAHLSAVPNQQTGRTLPITFRAHVAMMGGSFGLELNPAHMPDDERDAVPGLIALAERVNPIVLTGDMYRLSPHDSQWPAVLFISPDGEQAVLFYFQTSPRVDNSIPRVKMQGLDPQAVYSVDGDAEYSGATLMNVGLQFPFDSDVGSKVVFFQRL.

An N-terminal signal peptide occupies residues 1-24 (MVAFMNSATFVAGLFTLWSRPIWA). Residues N36, N182, N190, N362, N429, and N449 are each glycosylated (N-linked (GlcNAc...) asparagine). The Nucleophile role is filled by D507. N534 carries N-linked (GlcNAc...) asparagine glycosylation. D569 serves as the catalytic Proton donor.

This sequence belongs to the glycosyl hydrolase 36 family. As to quaternary structure, homotetramer. Mg(2+) serves as cofactor. It depends on NAD(+) as a cofactor.

Its subcellular location is the secreted. The catalysed reaction is Hydrolysis of terminal, non-reducing alpha-D-galactose residues in alpha-D-galactosides, including galactose oligosaccharides, galactomannans and galactolipids.. In terms of biological role, hydrolyzes a variety of simple alpha-D-galactoside as well as more complex molecules such as oligosaccharides and polysaccharides. This chain is Probable alpha-galactosidase C (aglC), found in Aspergillus terreus (strain NIH 2624 / FGSC A1156).